The following is a 482-amino-acid chain: tRNA sulfurtransferase (482 aa).

The region spanning 61–165 is the THUMP domain; it reads LAIRDALTRI…DDRLLLIKGR (105 aa). Residues 183-184, K265, G287, and Q296 contribute to the ATP site; that span reads LI. An intrachain disulfide couples C344 to C456. The 79-residue stretch at 404–482 folds into the Rhodanese domain; that stretch reads FGPNDVILDI…GFENVKVYRP (79 aa). The active-site Cysteine persulfide intermediate is the C456.

It belongs to the ThiI family.

It is found in the cytoplasm. The enzyme catalyses [ThiI sulfur-carrier protein]-S-sulfanyl-L-cysteine + a uridine in tRNA + 2 reduced [2Fe-2S]-[ferredoxin] + ATP + H(+) = [ThiI sulfur-carrier protein]-L-cysteine + a 4-thiouridine in tRNA + 2 oxidized [2Fe-2S]-[ferredoxin] + AMP + diphosphate. It carries out the reaction [ThiS sulfur-carrier protein]-C-terminal Gly-Gly-AMP + S-sulfanyl-L-cysteinyl-[cysteine desulfurase] + AH2 = [ThiS sulfur-carrier protein]-C-terminal-Gly-aminoethanethioate + L-cysteinyl-[cysteine desulfurase] + A + AMP + 2 H(+). It functions in the pathway cofactor biosynthesis; thiamine diphosphate biosynthesis. Functionally, catalyzes the ATP-dependent transfer of a sulfur to tRNA to produce 4-thiouridine in position 8 of tRNAs, which functions as a near-UV photosensor. Also catalyzes the transfer of sulfur to the sulfur carrier protein ThiS, forming ThiS-thiocarboxylate. This is a step in the synthesis of thiazole, in the thiamine biosynthesis pathway. The sulfur is donated as persulfide by IscS. The chain is tRNA sulfurtransferase from Salmonella enteritidis PT4 (strain P125109).